We begin with the raw amino-acid sequence, 882 residues long: Leucine--tRNA ligase (882 aa).

The short motif at 43 to 53 is the 'HIGH' region element; it reads PYPSGNLHMGH. A 'KMSKS' region motif is present at residues 632–636; that stretch reads TMSKS. Residue lysine 635 coordinates ATP.

The protein belongs to the class-I aminoacyl-tRNA synthetase family.

The protein localises to the cytoplasm. The catalysed reaction is tRNA(Leu) + L-leucine + ATP = L-leucyl-tRNA(Leu) + AMP + diphosphate. This chain is Leucine--tRNA ligase, found in Synechococcus sp. (strain JA-2-3B'a(2-13)) (Cyanobacteria bacterium Yellowstone B-Prime).